Here is a 104-residue protein sequence, read N- to C-terminus: SGSSPSSNSNYCNVMMFCRKMTQGKCKPVNTFAHEFLADVQAVCSQKKVTCKNGQTNCYQSNSAMSITDCRQTGSSKYPNCAYKTTQAQKHIIVACEGNPYVPV.

4 disulfide bridges follow: Cys-12/Cys-70, Cys-26/Cys-81, Cys-44/Cys-96, and Cys-51/Cys-58. Residues 27 to 31 (KPVNT), Lys-52, and Arg-71 contribute to the substrate site.

Belongs to the pancreatic ribonuclease family. As to quaternary structure, homodimer; disulfide-linked.

The protein resides in the secreted. The catalysed reaction is an [RNA] containing cytidine + H2O = an [RNA]-3'-cytidine-3'-phosphate + a 5'-hydroxy-ribonucleotide-3'-[RNA].. It carries out the reaction an [RNA] containing uridine + H2O = an [RNA]-3'-uridine-3'-phosphate + a 5'-hydroxy-ribonucleotide-3'-[RNA].. The sequence is that of Seminal ribonuclease (SRN) from Saiga tatarica (Saiga antelope).